The sequence spans 114 residues: Photosystem II reaction center Psb28 protein (114 aa).

It belongs to the Psb28 family. As to quaternary structure, part of the photosystem II complex.

It is found in the cellular thylakoid membrane. The chain is Photosystem II reaction center Psb28 protein from Rippkaea orientalis (strain PCC 8801 / RF-1) (Cyanothece sp. (strain PCC 8801)).